We begin with the raw amino-acid sequence, 198 residues long: Probable GTP-binding protein EngB (198 aa).

The region spanning 22 to 195 (NIPEVALAGR…LEVIGRWVGL (174 aa)) is the EngB-type G domain. GTP contacts are provided by residues 30 to 37 (GRSNVGKS), 57 to 61 (GRTRL), 75 to 78 (DLPG), 142 to 145 (TKAD), and 174 to 176 (FSA). Residues serine 37 and threonine 59 each coordinate Mg(2+).

Belongs to the TRAFAC class TrmE-Era-EngA-EngB-Septin-like GTPase superfamily. EngB GTPase family. Mg(2+) is required as a cofactor.

Necessary for normal cell division and for the maintenance of normal septation. The chain is Probable GTP-binding protein EngB from Pelotomaculum thermopropionicum (strain DSM 13744 / JCM 10971 / SI).